The chain runs to 263 residues: Isatin hydrolase (263 aa).

Substrate is bound at residue 62-66 (FFAWN). Mn(2+)-binding residues include His73, His77, and Asp79. The active-site Proton donor/acceptor is His83. His212 is a substrate binding site.

The protein belongs to the Cyclase 1 superfamily. In terms of assembly, homodimer. It depends on Mn(2+) as a cofactor.

The enzyme catalyses isatin + H2O = isatinate + H(+). Its activity is regulated as follows. Inhibited by thioisatinate. In terms of biological role, involved in the degradation of the plant hormone indole-3-acetic acid (IAA). Catalyzes the hydrolysis of the cyclic amide bond (lactam) of isatin (1H-indole-2,3-dione) to yield isatinate (2-(2-aminophenyl)-2-oxoacetate). The polypeptide is Isatin hydrolase (Roseibium aggregatum (strain ATCC 25650 / DSM 13394 / JCM 20685 / NBRC 16684 / NCIMB 2208 / IAM 12614 / B1) (Stappia aggregata)).